Consider the following 388-residue polypeptide: MISKKLIIELLKQLISFKSVTPNDNGAIDFITNLLVKQGFKVYVKEFGQEYKVKNLYGYFGNGQPNICFAGHIDVVPAGFIEQWKYPPFCATQYKDKIYGRGVVDMKGAISAMLSSVFCFIDNNHDFNGTISFLITADEEGEALFGTKKMLEWIYRQGHKIDFTILGEPTCTDKIGDTIKIGRRGSINFDLKVFGKQGHVAYPHLAINPNHLIVKILNRLIAYKIDEGNEFFAPSNLEIVSIDTNNNITNIIPEIAKSKFNIRFNDIHTNERLLEIVKKTIEQFTTNYDLQSSCRSRPFLAKMSPYIFSFKELVHKVTKIKPEFSTSGGTSDAYFFKDYSPIVEFGLLNTMAHKINEYCLINDLQTLCRVYYNALCLFLMSNSKFRTN.

Histidine 72 contacts Zn(2+). Aspartate 74 is a catalytic residue. Residue aspartate 105 participates in Zn(2+) binding. The Proton acceptor role is filled by glutamate 139. Glutamate 140, glutamate 168, and histidine 353 together coordinate Zn(2+).

Belongs to the peptidase M20A family. DapE subfamily. As to quaternary structure, homodimer. It depends on Zn(2+) as a cofactor. Co(2+) is required as a cofactor.

It catalyses the reaction N-succinyl-(2S,6S)-2,6-diaminopimelate + H2O = (2S,6S)-2,6-diaminopimelate + succinate. The protein operates within amino-acid biosynthesis; L-lysine biosynthesis via DAP pathway; LL-2,6-diaminopimelate from (S)-tetrahydrodipicolinate (succinylase route): step 3/3. Its function is as follows. Catalyzes the hydrolysis of N-succinyl-L,L-diaminopimelic acid (SDAP), forming succinate and LL-2,6-diaminopimelate (DAP), an intermediate involved in the bacterial biosynthesis of lysine and meso-diaminopimelic acid, an essential component of bacterial cell walls. The polypeptide is Succinyl-diaminopimelate desuccinylase (Orientia tsutsugamushi (strain Boryong) (Rickettsia tsutsugamushi)).